Here is a 289-residue protein sequence, read N- to C-terminus: DNA repair protein rad14 (289 aa).

Residues cysteine 116, cysteine 119, cysteine 137, and cysteine 140 each contribute to the Zn(2+) site. A zinc finger lies at 116 to 140 (CFECDSIELDTKYFDIFHCRVCHTC).

This sequence belongs to the XPA family. Interacts with hrq1.

Its subcellular location is the nucleus. Functionally, involved in nucleotide excision repair (NER). Functional in repair of ultraviolet radiation induced damages and in mitotic mutation avoidance. Binds damaged DNA. Binds specifically to base-base mismatches or small insertion/deletion loops with unpaired nucleotides. Maintains GT repeat stability. Functions as a part of the short-patch excision repair system. In Schizosaccharomyces pombe (strain 972 / ATCC 24843) (Fission yeast), this protein is DNA repair protein rad14.